A 646-amino-acid polypeptide reads, in one-letter code: ATP-dependent zinc metalloprotease FtsH (646 aa).

Residues 1 to 4 lie on the Cytoplasmic side of the membrane; sequence MTRS. Residues 5–25 traverse the membrane as a helical segment; it reads LLWQMVIVLGAILMVNYVLTT. At 26–120 the chain is on the periplasmic side; the sequence is LTPQTQEPVV…VRPESKPSPW (95 aa). Residues 121-141 traverse the membrane as a helical segment; the sequence is ATAMIYMLPWLLIVGVWWFVI. At 142–646 the chain is on the cytoplasmic side; it reads KGMRTRQGPG…GELAGGAVEG (505 aa). 216–223 provides a ligand contact to ATP; it reads GPPGTGKT. His-437 serves as a coordination point for Zn(2+). Glu-438 is a catalytic residue. Positions 441 and 513 each coordinate Zn(2+).

The protein in the central section; belongs to the AAA ATPase family. It in the C-terminal section; belongs to the peptidase M41 family. As to quaternary structure, homohexamer. It depends on Zn(2+) as a cofactor.

It is found in the cell inner membrane. Functionally, acts as a processive, ATP-dependent zinc metallopeptidase for both cytoplasmic and membrane proteins. Plays a role in the quality control of integral membrane proteins. This is ATP-dependent zinc metalloprotease FtsH from Syntrophotalea carbinolica (strain DSM 2380 / NBRC 103641 / GraBd1) (Pelobacter carbinolicus).